The chain runs to 885 residues: Pyruvate, phosphate dikinase (885 aa).

Residues 1-342 (MQRVYAFEDG…LYMLQTRNGK (342 aa)) form an N-terminal region. Residue Arg-91 coordinates ATP. The segment at 343–399 (MNATATVRTGVDMVEEGLITKEQAIMRIAPQSVDQLLHKNMPANYAEAPLVKGLPAS) is linker 1. Residues 400–497 (PGAATGAVVF…EVHEGDILTI (98 aa)) form a central region. His-454 (tele-phosphohistidine intermediate) is an active-site residue. The linker 2 stretch occupies residues 498–533 (DGSTGCVYKGEVPLEEPQVGSGYFGTILKWANEIKK). Positions 534-885 (IGVFANADLP…QAQIRHPREN (352 aa)) are C-terminal. Residues Arg-561, Arg-617, Glu-752, Gly-773, Thr-774, Asn-775, and Asp-776 each contribute to the substrate site. Glu-752 is a Mg(2+) binding site. Asp-776 is a binding site for Mg(2+). The active-site Proton donor is Cys-839.

The protein belongs to the PEP-utilizing enzyme family. As to quaternary structure, homodimer. Mg(2+) is required as a cofactor.

It catalyses the reaction pyruvate + phosphate + ATP = phosphoenolpyruvate + AMP + diphosphate + H(+). Functionally, catalyzes the dephosphorylation of phosphoenolpyruvate and diphosphate to produce ATP. The sequence is that of Pyruvate, phosphate dikinase from Entamoeba histolytica (strain ATCC 30459 / HM-1:IMSS / ABRM).